Reading from the N-terminus, the 868-residue chain is Leucine--tRNA ligase (868 aa).

A 'HIGH' region motif is present at residues 42–52 (PYPSGKLHMGH). The 'KMSKS' region motif lies at 627 to 631 (KMAKS). K630 is a binding site for ATP.

This sequence belongs to the class-I aminoacyl-tRNA synthetase family.

Its subcellular location is the cytoplasm. It catalyses the reaction tRNA(Leu) + L-leucine + ATP = L-leucyl-tRNA(Leu) + AMP + diphosphate. The chain is Leucine--tRNA ligase from Pseudomonas fluorescens (strain ATCC BAA-477 / NRRL B-23932 / Pf-5).